Reading from the N-terminus, the 316-residue chain is Transaldolase 1 (316 aa).

The active-site Schiff-base intermediate with substrate is lysine 131.

It belongs to the transaldolase family. Type 1 subfamily. Homodimer.

It localises to the cytoplasm. It catalyses the reaction D-sedoheptulose 7-phosphate + D-glyceraldehyde 3-phosphate = D-erythrose 4-phosphate + beta-D-fructose 6-phosphate. It participates in carbohydrate degradation; pentose phosphate pathway; D-glyceraldehyde 3-phosphate and beta-D-fructose 6-phosphate from D-ribose 5-phosphate and D-xylulose 5-phosphate (non-oxidative stage): step 2/3. Transaldolase is important for the balance of metabolites in the pentose-phosphate pathway. This is Transaldolase 1 from Pectobacterium atrosepticum (strain SCRI 1043 / ATCC BAA-672) (Erwinia carotovora subsp. atroseptica).